Reading from the N-terminus, the 800-residue chain is U4/U6.U5 tri-snRNP-associated protein 1 (800 aa).

Positions 1-120 are disordered; sequence MGSSKKHRGE…SSGDASSLSI (120 aa). Over residues 32 to 42 the composition is skewed to basic residues; that stretch reads HREHKKHKHRS. The segment covering 58 to 101 has biased composition (basic and acidic residues); sequence ERGGERGSGRRGAEAEARSSTHGRERSQAEPSERRVKREKRDDG. Residues 104-119 show a composition bias toward low complexity; that stretch reads AAASSKTSSGDASSLS. Residues lysine 125 and lysine 133 each participate in a glycyl lysine isopeptide (Lys-Gly) (interchain with G-Cter in SUMO2) cross-link. A Glycyl lysine isopeptide (Lys-Gly) (interchain with G-Cter in SUMO1); alternate cross-link involves residue lysine 141. Lysine 141 participates in a covalent cross-link: Glycyl lysine isopeptide (Lys-Gly) (interchain with G-Cter in SUMO2); alternate. Glycyl lysine isopeptide (Lys-Gly) (interchain with G-Cter in SUMO2) cross-links involve residues lysine 147 and lysine 188. Residues 157 to 231 adopt a coiled-coil conformation; that stretch reads NPMALRQREE…KLLEEMDQEF (75 aa). Threonine 189 is subject to Phosphothreonine. A Glycyl lysine isopeptide (Lys-Gly) (interchain with G-Cter in SUMO2) cross-link involves residue lysine 277. Residues 311–330 form a disordered region; the sequence is PDYLPYAEDESVDDLAQQKP. Phosphoserine is present on serine 321. Glycyl lysine isopeptide (Lys-Gly) (interchain with G-Cter in SUMO2) cross-links involve residues lysine 329 and lysine 336. A Phosphoserine modification is found at serine 348. Threonine 392 is subject to Phosphothreonine. Residues lysine 400 and lysine 414 each participate in a glycyl lysine isopeptide (Lys-Gly) (interchain with G-Cter in SUMO2) cross-link. The interval 419-497 is disordered; sequence RADDLLPLGD…QVLEEDEAEL (79 aa). Threonine 430 is subject to Phosphothreonine. 4 positions are modified to phosphoserine: serine 448, serine 474, serine 486, and serine 521. Residues 490-533 adopt a coiled-coil conformation; sequence LEEDEAELELQKQLEKGRRLRQLQQLQQLRDSGEKVVEIVKKLE. A Glycyl lysine isopeptide (Lys-Gly) (interchain with G-Cter in SUMO2) cross-link involves residue lysine 548. Residues 571–604 form a disordered region; it reads LAGNREEQEELMDFERDEERSANGGSESDGEENI. 4 positions are modified to phosphoserine: serine 591, serine 596, serine 598, and serine 621. Glycyl lysine isopeptide (Lys-Gly) (interchain with G-Cter in SUMO2) cross-links involve residues lysine 648, lysine 657, and lysine 684. At threonine 695 the chain carries Phosphothreonine. Glycyl lysine isopeptide (Lys-Gly) (interchain with G-Cter in SUMO2) cross-links involve residues lysine 699, lysine 709, lysine 723, lysine 749, and lysine 758. Serine 761 bears the Phosphoserine mark. Threonine 764 carries the phosphothreonine modification. Glycyl lysine isopeptide (Lys-Gly) (interchain with G-Cter in SUMO2) cross-links involve residues lysine 775 and lysine 780. Serine 789 is modified (phosphoserine). Residue lysine 791 forms a Glycyl lysine isopeptide (Lys-Gly) (interchain with G-Cter in SUMO2) linkage.

Belongs to the SNU66/SART1 family. Identified in the spliceosome C complex. Component of the U4/U6-U5 tri-snRNP complex composed of the U4, U6 and U5 snRNAs and at least PRPF3, PRPF4, PRPF6, PRPF8, PRPF31, SNRNP200, TXNL4A, SNRNP40, DDX23, CD2BP2, PPIH, SNU13, EFTUD2, SART1 and USP39. Interacts with UBL5. Interacts with IVNS1ABP (via Kelch repeats). In terms of processing, sumoylated with SUMO2. In terms of tissue distribution, ubiquitously expressed.

The protein resides in the nucleus. In terms of biological role, plays a role in mRNA splicing as a component of the U4/U6-U5 tri-snRNP, one of the building blocks of the spliceosome. May also bind to DNA. In Homo sapiens (Human), this protein is U4/U6.U5 tri-snRNP-associated protein 1 (SART1).